Reading from the N-terminus, the 509-residue chain is Putative (R)-citramalate synthase CimA (509 aa).

Residues 14–267 (VRIFDTTLRD…DTGIRTERLT (254 aa)) form the Pyruvate carboxyltransferase domain.

Belongs to the alpha-IPM synthase/homocitrate synthase family. Homodimer.

The catalysed reaction is pyruvate + acetyl-CoA + H2O = (3R)-citramalate + CoA + H(+). It participates in amino-acid biosynthesis; L-isoleucine biosynthesis; 2-oxobutanoate from pyruvate: step 1/3. Its function is as follows. Catalyzes the condensation of pyruvate and acetyl-coenzyme A to form (R)-citramalate. The polypeptide is Putative (R)-citramalate synthase CimA (cimA) (Methanopyrus kandleri (strain AV19 / DSM 6324 / JCM 9639 / NBRC 100938)).